We begin with the raw amino-acid sequence, 72 residues long: ADVPGNYPLNTYGNMYYCTILGENEFCRKVCKVHGVKYGYCFNSHCWCEYLEAKDVSVWNAAKNYCKNPVGK.

The LCN-type CS-alpha/beta domain occupies 3–67; sequence VPGNYPLNTY…VWNAAKNYCK (65 aa). 3 disulfide bridges follow: Cys-18/Cys-41, Cys-27/Cys-46, and Cys-31/Cys-48.

It belongs to the long (3 C-C) scorpion toxin superfamily. Sodium channel inhibitor family. Beta subfamily. As to expression, expressed by the venom gland.

It is found in the secreted. Functionally, binds to sodium channels (Nav) and affects the channel activation process. The chain is Toxin Acra II-1 from Androctonus crassicauda (Arabian fat-tailed scorpion).